The chain runs to 518 residues: Type II methyltransferase M.HindII (518 aa).

Belongs to the N(4)/N(6)-methyltransferase family.

It carries out the reaction a 2'-deoxyadenosine in DNA + S-adenosyl-L-methionine = an N(6)-methyl-2'-deoxyadenosine in DNA + S-adenosyl-L-homocysteine + H(+). Functionally, a gamma subtype methylase, recognizes the double-stranded sequence 5'-GTYRAC-3', methylates A-5 on both strands, and protects the DNA from cleavage by the HindII endonuclease. In Haemophilus influenzae (strain ATCC 51907 / DSM 11121 / KW20 / Rd), this protein is Type II methyltransferase M.HindII (hindIIM).